We begin with the raw amino-acid sequence, 921 residues long: Protein translocase subunit SecA (921 aa).

ATP-binding positions include Gln-86, 104–108 (GEGKT), and Asp-512. Positions 905, 907, 916, and 917 each coordinate Zn(2+).

Belongs to the SecA family. Monomer and homodimer. Part of the essential Sec protein translocation apparatus which comprises SecA, SecYEG and auxiliary proteins SecDF-YajC and YidC. It depends on Zn(2+) as a cofactor.

Its subcellular location is the cell inner membrane. The protein resides in the cytoplasm. It carries out the reaction ATP + H2O + cellular proteinSide 1 = ADP + phosphate + cellular proteinSide 2.. Its function is as follows. Part of the Sec protein translocase complex. Interacts with the SecYEG preprotein conducting channel. Has a central role in coupling the hydrolysis of ATP to the transfer of proteins into and across the cell membrane, serving both as a receptor for the preprotein-SecB complex and as an ATP-driven molecular motor driving the stepwise translocation of polypeptide chains across the membrane. The sequence is that of Protein translocase subunit SecA from Caulobacter sp. (strain K31).